The chain runs to 899 residues: Protein argonaute (899 aa).

A disordered region spans residues 107-129 (TQKPKRRGGRAGGMRGNRGGPST). The segment covering 116–125 (RAGGMRGNRG) has biased composition (gly residues). The 85-residue stretch at 229–313 (SMCELLNENR…KQDDYCNSVL (85 aa)) folds into the PAZ domain. The Piwi domain maps to 555–878 (LVVVVIPGPK…LSKFCGEILG (324 aa)).

Belongs to the argonaute family. Ago subfamily. Interacts with miR2. Highly specific binding to the mRNA m7G-cap. May be a component of the RNA-induced silencing complex (RISC), a sequence-specific, multicomponent nuclease that destroys or silences messenger RNAs homologous to the silencing trigger.

It localises to the cytoplasm. Functionally, plays an essential role in growth and, with Dicer, also involved in microRNA (miRNA)-mediated translational repression. The RNA interference pathway is implicated in antigenic variation having a role in regulation of variant-specific surface protein (VSP)-coding gene expression. Several VSP genes are transcribed but only transcripts encoding the VSP to be expressed accumulate. Antisense RNAs corresponding to the silenced VSP genes are detected. The polypeptide is Protein argonaute (Giardia intestinalis (strain ATCC 50581 / GS clone H7) (Giardia lamblia)).